The chain runs to 130 residues: Glycine cleavage system H protein (130 aa).

A Lipoyl-binding domain is found at 24–106 (TVTIGITDHA…YDEGWFFKVK (83 aa)). At Lys-65 the chain carries N6-lipoyllysine.

The protein belongs to the GcvH family. The glycine cleavage system is composed of four proteins: P, T, L and H. (R)-lipoate is required as a cofactor.

In terms of biological role, the glycine cleavage system catalyzes the degradation of glycine. The H protein shuttles the methylamine group of glycine from the P protein to the T protein. The sequence is that of Glycine cleavage system H protein from Teredinibacter turnerae (strain ATCC 39867 / T7901).